The primary structure comprises 330 residues: Serine/threonine-protein phosphatase PP1-alpha catalytic subunit (330 aa).

At Ser2 the chain carries N-acetylserine. Phosphoserine is present on residues Ser2 and Ser22. The Mn(2+) site is built by Asp64, His66, Asp92, and Asn124. Catalysis depends on His125, which acts as the Proton donor. The Mn(2+) site is built by His173 and His248. Lys305 carries the N6-acetyllysine modification. Residue Tyr306 is modified to Phosphotyrosine. Residues 306–330 (YGQFSGLNPGGRPITPPRNSAKAKK) are disordered. Residue Thr320 is modified to Phosphothreonine. Ser325 is modified (phosphoserine).

The protein belongs to the PPP phosphatase family. PP-1 subfamily. PP1 comprises a catalytic subunit, PPP1CA, PPP1CB or PPP1CC, which is folded into its native form by inhibitor 2 and glycogen synthetase kinase 3, and then complexed to one or several targeting or regulatory subunits. PPP1R12A, PPP1R12B and PPP1R12C mediate binding to myosin. PPP1R3A (in skeletal muscle), PPP1R3B (in liver), PPP1R3C, PPP1R3D and PPP1R3F (in brain) mediate binding to glycogen. Interacts with PPP1R39. Interacts with BTBD10. Interacts with KCTD20. Interacts with PPP1R9A and PPP1R9B. Part of a complex containing PPP1R15B, PP1 and NCK1/2. Interacts with PHACTR4; which acts as an activator of PP1 activity. Interacts with PPP1R15A and PPP1R15B; the interactions mediate binding to EIF2S1. Interacts with PPP1R7. Interacts with YLPM1. Forms a complex with ILF2, ILF3, YLPM1, KHDRBS1, RBMX and NCOA5. Interacts with NOM1 and PPP1R8. Interacts with PPP1R16B. Interacts with RPSA only in the presence of PPP1R16B. Component of the PNUTS-PP1 phosphatase complex, composed of PPP1R10/PNUTS, TOX4, WDR82, and PPP1CA or PPP1CB or PPP1CC. Interacts with PPP1R10/PNUTS and PPP1R8. Interacts with WDR82 in the presence of PPP1R10/PNUTS. Interacts with TRIM28; the interaction dephosphorylates TRIM28 on 'Ser-824' and forms a complex at the p21 promoter site. Interacts with isoform 1 and isoform 4 of NEK2. Interacts with FER; this promotes phosphorylation at Thr-320. Interacts with DAB2; the interaction is mutually exclusive with the AXIN1:PPP1CA interaction. Interacts with FOXP3. Interacts with CENPA. Interacts with ATG16L1. Found in a complex with PPP1CA, PPP1CC, SHC1 and PEAK1. Interacts with tensin TNS1. Interacts with SAXO4, PPP1R21, PPP1R26, PPP1R27, PPP1R35, PPP1R36, PPP1R37, SH3RF2, ELFN1 and ELFN2. Interacts with TPRN; the interaction results in inhibition of PPC1A phosphatase activity. Interacts with SKA1 (via C-terminus); the interaction is direct and required for the recruitment of PP1 to the kinetochore. Interacts with the KNL1 complex subunit KNL1; the interaction is direct and mutually exclusive with KNL1 binding to microtubules. Component of the SHOC2-MRAS-PP1c (SMP) complex consisting of SHOC2, GTP-bound M-Ras/MRAS and the catalytic subunit of protein phosphatase 1 (either PPP1CA, PPP1CB or PPP1CC). SHOC2 and PP1c preferably bind M-Ras/MRAS, but they also bind K-Ras/KRAS, N-Ras/NRAS and H-Ras/HRAS; these interactions are GTP-dependent and both SHOC2 and PP1c are required to form a stable complex. Interacts with SHOC2 in the absence of Ras GTPases. As to quaternary structure, (Microbial infection) Interacts with HHV-1 ICP34.5. In terms of assembly, (Microbial infection) Interacts with Venezuelan equine encephalitis virus (VEEV) capsid protein; this interaction dephosphorylates the capsid protein, which increases its ability to bind to the viral genome. It depends on Fe cation as a cofactor. Mn(2+) serves as cofactor. Post-translationally, phosphorylated. Dephosphorylated at Thr-320 in the presence of ionizing radiation.

The protein localises to the cytoplasm. The protein resides in the nucleus. It is found in the nucleoplasm. Its subcellular location is the nucleolus. It catalyses the reaction O-phospho-L-seryl-[protein] + H2O = L-seryl-[protein] + phosphate. The catalysed reaction is O-phospho-L-threonyl-[protein] + H2O = L-threonyl-[protein] + phosphate. The phosphatase activity of the PPP1R15A-PP1 complex toward EIF2S1 is specifically inhibited by Salubrinal, a drug that protects cells from endoplasmic reticulum stress. Its function is as follows. Protein phosphatase that associates with over 200 regulatory proteins to form highly specific holoenzymes which dephosphorylate hundreds of biological targets. Protein phosphatase 1 (PP1) is essential for cell division, transcription elongation, and participates in the regulation of glycogen metabolism, muscle contractility and protein synthesis. Involved in regulation of ionic conductances and long-term synaptic plasticity. May play an important role in dephosphorylating substrates such as the postsynaptic density-associated Ca(2+)/calmodulin dependent protein kinase II. Catalytic component of the PNUTS-PP1 protein phosphatase complex, a protein phosphatase 1 (PP1) complex that promotes RNA polymerase II transcription pause-release, allowing transcription elongation: the PNUTS-PP1 complex mediates the release of RNA polymerase II from promoter-proximal region of genes by catalyzing dephosphorylation of proteins involved in transcription, such as AFF4, CDK9, MEPCE, INTS12, NCBP1, POLR2M/GDOWN1 and SUPT6H. The PNUTS-PP1 complex also regulates transcription termination by mediating dephosphorylation of SUPT5H in termination zones downstream of poly(A) sites, thereby promoting deceleration of RNA polymerase II transcription. PNUTS-PP1 complex is also involved in the response to replication stress by mediating dephosphorylation of POLR2A at 'Ser-5' of the CTD, promoting RNA polymerase II degradation. PNUTS-PP1 also plays a role in the control of chromatin structure and cell cycle progression during the transition from mitosis into interphase. Regulates NEK2 function in terms of kinase activity and centrosome number and splitting, both in the presence and absence of radiation-induced DNA damage. Regulator of neural tube and optic fissure closure, and enteric neural crest cell (ENCCs) migration during development. In balance with CSNK1D and CSNK1E, determines the circadian period length, through the regulation of the speed and rhythmicity of PER1 and PER2 phosphorylation. May dephosphorylate CSNK1D and CSNK1E. Dephosphorylates the 'Ser-418' residue of FOXP3 in regulatory T-cells (Treg) from patients with rheumatoid arthritis, thereby inactivating FOXP3 and rendering Treg cells functionally defective. Dephosphorylates CENPA. Dephosphorylates the 'Ser-139' residue of ATG16L1 causing dissociation of ATG12-ATG5-ATG16L1 complex, thereby inhibiting autophagy. Together with PPP1CC (PP1-gamma subunit), dephosphorylates IFIH1/MDA5 and RIG-I leading to their activation and a functional innate immune response. Core component of the SHOC2-MRAS-PP1c (SMP) holophosphatase complex that regulates the MAPK pathway activation. The SMP complex specifically dephosphorylates the inhibitory phosphorylation at 'Ser-259' of RAF1 kinase, 'Ser-365' of BRAF kinase and 'Ser-214' of ARAF kinase, stimulating their kinase activities. The SMP complex enhances the dephosphorylation activity and substrate specificity of PP1c. Functionally, (Microbial infection) Necessary for alphaviruses replication. This is Serine/threonine-protein phosphatase PP1-alpha catalytic subunit (PPP1CA) from Homo sapiens (Human).